The chain runs to 232 residues: LexA repressor (232 aa).

Residues Phe-26–Thr-46 constitute a DNA-binding region (H-T-H motif). Catalysis depends on for autocatalytic cleavage activity residues Ser-153 and Lys-191.

Belongs to the peptidase S24 family. In terms of assembly, homodimer.

It catalyses the reaction Hydrolysis of Ala-|-Gly bond in repressor LexA.. Its function is as follows. Represses a number of genes involved in the response to DNA damage (SOS response), including recA and lexA. In the presence of single-stranded DNA, RecA interacts with LexA causing an autocatalytic cleavage which disrupts the DNA-binding part of LexA, leading to derepression of the SOS regulon and eventually DNA repair. This is LexA repressor from Bradyrhizobium sp. (strain ORS 278).